A 524-amino-acid chain; its full sequence is MQLSKSILLAALAATPSLVNAMLPIHIKNYRFIKPSSATNSESDNEVFFVKGVDYQPGGSSGYDADSDTDILSDPEVCARDAYAFQQLGVNTVRIYSLNPDLNHDKCMTIFNNAGIYAILDVNSGNYGESLNRADPSGTYDSLYLSRVFKFIDAFKNYPNVLGFFSGNEVINDQSDYAKIDPPYIRAVQRDMKQYISKHANRSIPVGYSAADNTDLRLATFKYLQCNSLDGNKVNDDLDISKSDFFGLNTYEWCSGTSSWESSGYDKLNSTFEDAVIPLIFSEYGCNKNTPRTFDEVSEGLYGGLKNVFSGGLVYEYTEEANNYGLVKLDDSGSLTYKDDFVNLESQLKNVSLPTTKESEISSDSIYKCDNSAITNIYSGFGTNNFTLPSQPAEIANMIEYGVNGTNTGKILTDYAVPTTFNYTIKNNKDDTISATISYDKANSLNELDVTATTVAKSASTSQSSSRSLTSSTSPSSSTGSSSSTGSSSASSSSKSKGVGNIVNVSFSQSGYLALFAGLISALL.

The N-terminal stretch at 1 to 21 (MQLSKSILLAALAATPSLVNA) is a signal peptide. Cys-78 and Cys-107 form a disulfide bridge. (1,3-beta-D-glucosyl)n-binding residues include Tyr-96, Asn-168, and Glu-169. Glu-169 serves as the catalytic Proton donor. An N-linked (GlcNAc...) asparagine glycan is attached at Asn-201. The (1,3-beta-D-glucosyl)n site is built by Asp-212 and Arg-217. Cystine bridges form between Cys-226–Cys-369 and Cys-254–Cys-286. A glycan (N-linked (GlcNAc...) asparagine) is linked at Asn-269. Catalysis depends on Glu-283, which acts as the Nucleophile. A (1,3-beta-D-glucosyl)n-binding site is contributed by Tyr-315. 4 N-linked (GlcNAc...) asparagine glycosylation sites follow: Asn-350, Asn-385, Asn-404, and Asn-422. Residues 461–498 (TSQSSSRSLTSSTSPSSSTGSSSSTGSSSASSSSKSKG) are disordered. A lipid anchor (GPI-anchor amidated glycine) is attached at Gly-498. Residues 499-524 (VGNIVNVSFSQSGYLALFAGLISALL) constitute a propeptide, removed in mature form.

It belongs to the glycosyl hydrolase 72 family. The GPI-anchor is attached to the protein in the endoplasmic reticulum and serves to target the protein to the cell surface. There, the glucosamine-inositol phospholipid moiety is cleaved off and the GPI-modified mannoprotein is covalently attached via its lipidless GPI glycan remnant to the 1,6-beta-glucan of the outer cell wall layer. In terms of processing, N-glycosylated.

The protein resides in the secreted. The protein localises to the cell wall. Its subcellular location is the membrane. In terms of biological role, splits internally a 1,3-beta-glucan molecule and transfers the newly generated reducing end (the donor) to the non-reducing end of another 1,3-beta-glucan molecule (the acceptor) forming a 1,3-beta linkage, resulting in the elongation of 1,3-beta-glucan chains in the cell wall. Involved in cell wall biosynthesis and morphogenesis. This chain is Probable 1,3-beta-glucanosyltransferase GAS3 (GAS3), found in Saccharomyces cerevisiae (strain ATCC 204508 / S288c) (Baker's yeast).